Here is a 341-residue protein sequence, read N- to C-terminus: Guanine nucleotide-binding protein subunit beta (341 aa).

7 WD repeats span residues 54-84, 96-126, 142-171, 183-213, 225-255, 269-299, and 311-341; these read GHLA…IVWD, LRSS…SIYS, GHTG…ALWD, GHTG…KLWD, GHES…RLFD, NIIC…NVWD, and GHDN…KIWN.

It belongs to the WD repeat G protein beta family. As to quaternary structure, g proteins are composed of 3 units, alpha, beta and gamma.

Its function is as follows. Guanine nucleotide-binding proteins (G proteins) are involved as a modulator or transducer in various transmembrane signaling systems. The beta and gamma chains are required for the GTPase activity, for replacement of GDP by GTP, and for G protein-effector interaction. This Lymnaea stagnalis (Great pond snail) protein is Guanine nucleotide-binding protein subunit beta.